The chain runs to 214 residues: Probable chemoreceptor glutamine deamidase CheD (214 aa).

The protein belongs to the CheD family.

The catalysed reaction is L-glutaminyl-[protein] + H2O = L-glutamyl-[protein] + NH4(+). Probably deamidates glutamine residues to glutamate on methyl-accepting chemotaxis receptors (MCPs), playing an important role in chemotaxis. The polypeptide is Probable chemoreceptor glutamine deamidase CheD (Vibrio vulnificus (strain YJ016)).